The following is a 181-amino-acid chain: Putative NAD(P)H-dependent FMN-containing oxidoreductase YwqN (181 aa).

The protein belongs to the SsuE family. Requires FMN as cofactor.

Functionally, putative NADPH-dependent oxidoreductase. This is Putative NAD(P)H-dependent FMN-containing oxidoreductase YwqN (ywqN) from Bacillus subtilis (strain 168).